A 669-amino-acid chain; its full sequence is DNA mismatch repair protein MutL (669 aa).

Residues 356–382 (FEQRQNTENNQEKTFSSEESNSKPFME) form a disordered region. Residues 361–378 (NTENNQEKTFSSEESNSK) show a composition bias toward polar residues.

Belongs to the DNA mismatch repair MutL/HexB family.

In terms of biological role, this protein is involved in the repair of mismatches in DNA. It is required for dam-dependent methyl-directed DNA mismatch repair. May act as a 'molecular matchmaker', a protein that promotes the formation of a stable complex between two or more DNA-binding proteins in an ATP-dependent manner without itself being part of a final effector complex. The chain is DNA mismatch repair protein MutL from Staphylococcus aureus (strain USA300).